We begin with the raw amino-acid sequence, 117 residues long: Ribonuclease P protein component (117 aa).

The protein belongs to the RnpA family. Consists of a catalytic RNA component (M1 or rnpB) and a protein subunit.

It catalyses the reaction Endonucleolytic cleavage of RNA, removing 5'-extranucleotides from tRNA precursor.. Functionally, RNaseP catalyzes the removal of the 5'-leader sequence from pre-tRNA to produce the mature 5'-terminus. It can also cleave other RNA substrates such as 4.5S RNA. The protein component plays an auxiliary but essential role in vivo by binding to the 5'-leader sequence and broadening the substrate specificity of the ribozyme. The protein is Ribonuclease P protein component of Lactococcus lactis subsp. cremoris (strain MG1363).